The chain runs to 445 residues: Nuclear hormone receptor family member nhr-1 (445 aa).

A disordered region spans residues 19–55 (PMVNSQRNEDPSMYMNGSAASVSHTNGSSSMGNDQKF). Residues 36–51 (SAASVSHTNGSSSMGN) are compositionally biased toward polar residues. Positions 70-145 (GELCAVCSDL…VGMDAKALQI (76 aa)) form a DNA-binding region, nuclear receptor. NR C4-type zinc fingers lie at residues 73–93 (CAVC…CNGC) and 109–133 (CQYN…FNKC). One can recognise an NR LBD domain in the interval 179 to 444 (QDQEIIDQLT…PFVKELCMKR (266 aa)).

Belongs to the nuclear hormone receptor family.

The protein resides in the nucleus. Functionally, orphan nuclear receptor which acts in concert with the insulin/IGF-1-like signaling (IIS) pathway during osmotic stress, perhaps in response to a ligand modified by the sulfotransferase ssu-1. This is Nuclear hormone receptor family member nhr-1 (nhr-1) from Caenorhabditis elegans.